The primary structure comprises 252 residues: Isoprenyl transferase (252 aa).

D28 is a catalytic residue. Position 28 (D28) interacts with Mg(2+). Substrate contacts are provided by residues 29–32, W33, R41, H45, and 73–75; these read GNGR and STE. N76 (proton acceptor) is an active-site residue. Substrate contacts are provided by residues W77, R79, R200, and 206-208; that span reads RLS. A Mg(2+)-binding site is contributed by E219.

It belongs to the UPP synthase family. As to quaternary structure, homodimer. Requires Mg(2+) as cofactor.

Catalyzes the condensation of isopentenyl diphosphate (IPP) with allylic pyrophosphates generating different type of terpenoids. In Streptococcus pneumoniae serotype 4 (strain ATCC BAA-334 / TIGR4), this protein is Isoprenyl transferase.